The chain runs to 906 residues: Protein translocase subunit SecA (906 aa).

Residues Gln87, 105–109 (GEGKT), and Asp507 contribute to the ATP site. A compositionally biased stretch (basic and acidic residues) spans 553–563 (RHESRRIDNQL). Disordered regions lie at residues 553–576 (RHES…PGSS) and 854–906 (LEEP…GRLA). Residues Cys890, Cys892, Cys901, and His902 each contribute to the Zn(2+) site. The segment covering 896 to 906 (KKYKQCHGRLA) has biased composition (basic residues).

It belongs to the SecA family. In terms of assembly, monomer and homodimer. Part of the essential Sec protein translocation apparatus which comprises SecA, SecYEG and auxiliary proteins SecDF-YajC and YidC. The cofactor is Zn(2+).

It localises to the cell inner membrane. The protein resides in the cytoplasm. The catalysed reaction is ATP + H2O + cellular proteinSide 1 = ADP + phosphate + cellular proteinSide 2.. In terms of biological role, part of the Sec protein translocase complex. Interacts with the SecYEG preprotein conducting channel. Has a central role in coupling the hydrolysis of ATP to the transfer of proteins into and across the cell membrane, serving both as a receptor for the preprotein-SecB complex and as an ATP-driven molecular motor driving the stepwise translocation of polypeptide chains across the membrane. The protein is Protein translocase subunit SecA of Methylococcus capsulatus (strain ATCC 33009 / NCIMB 11132 / Bath).